The sequence spans 289 residues: MAPISSTWSRLIRFVAIETSLVHIGEPIDATMDVGLARREGKTIQAYEIIGSGSALDLSAQVSKNVLTVRELLMPLSREEIKTVRCLGLNYPVHATEANVAVPKFPNLFYKPVTSLIGPDGLITIPSVVQPPKEHQSDYEAELVIVIGKAAKNVSEDEALDYVLGYTAANDISFRKHQLAVSQWSFSKGFGSLLLTIRMAQTHSGNINRFSRDQIFNVKKTISFLSQGTTLEPGSIILTGTPDGVGFVRNPPLYLKDGDEVMTWIGSGIGTLANTVQEEKTCFASGGHE.

Residues glutamate 140, glutamate 142, and aspartate 171 each contribute to the a divalent metal cation site.

It belongs to the FAH family. Homodimer. It depends on Mg(2+) as a cofactor. Mn(2+) is required as a cofactor.

The catalysed reaction is (E)-caffeoylpyruvate + H2O = (E)-caffeate + pyruvate + H(+). It participates in secondary metabolite biosynthesis. Functionally, caffeoylpyruvate hydrolase; part of the gene cluster that mediates the fungal bioluminescence cycle. Involved in the recycling of oxyluciferin, a pyruvic acid adduct of caffeic acid, to caffeic acid. The fungal bioluminescence cycle begins with the hispidin synthetase that catalyzes the formation of hispidin which is further hydroxylated by the hispidin-3-hydroxylase, yielding the fungal luciferin 3-hydroxyhispidin. The luciferase then produces an endoperoxide as a high-energy intermediate with decomposition that yields oxyluciferin (also known as caffeoylpyruvate) and light emission. Oxyluciferin can be recycled to caffeic acid by caffeoylpyruvate hydrolase. The protein is Caffeoylpyruvate hydrolase of Neonothopanus nambi (Agaricus nambi).